Consider the following 377-residue polypeptide: Opsin, blue-sensitive (377 aa).

Topologically, residues 1–56 (MLLHNKTLAGKALAFIAEEGYVPSMREKFLGWNVPPEYSDLVHPHWRAFPAPGKHF) are extracellular. N-linked (GlcNAc...) asparagine glycosylation occurs at N5. The chain crosses the membrane as a helical span at residues 57–81 (HIGLAIIYSMLLIMSLVGNCCVIWI). Topologically, residues 82–93 (FSTSKSLRTPSN) are cytoplasmic. A helical transmembrane segment spans residues 94 to 119 (MFIVSLAIFDIIMAFEMPMLVISSFM). At 120 to 132 (ERMIGWEIGCDVY) the chain is on the extracellular side. C129 and C206 are oxidised to a cystine. The chain crosses the membrane as a helical span at residues 133–152 (SVFGSISGMGQAMTNAAIAF). Residues 153-170 (DRYRTISCPIDGRLNSKQ) lie on the Cytoplasmic side of the membrane. The helical transmembrane segment at 171 to 195 (AAVIIAFTWFWVTPFTVLPLLKVWG) threads the bilayer. Residues 196–219 (RYTTEGFLTTCSFDFLTDDEDTKV) are Extracellular-facing. The chain crosses the membrane as a helical span at residues 220–247 (FVTCIFIWAYVIPLIFIILFYSRLLSSI). At 248–282 (RNHEKMLREQAKKMNVKSLVSNQDKERSAEVRIAK) the chain is on the cytoplasmic side. Residues 283-306 (VAFTIFFLFLLAWTPYATVALIGV) form a helical membrane-spanning segment. At 307–314 (YGNRELLT) the chain is on the extracellular side. A helical membrane pass occupies residues 315–339 (PVSTMLPAVFAKTVSCIDPWIYAIN). Residue K326 is modified to N6-(retinylidene)lysine. Over 340–377 (HPRYRQELQKRCKWMGIHEPETTSDATSAQTEKIKTDE) the chain is Cytoplasmic.

Belongs to the G-protein coupled receptor 1 family. Opsin subfamily. Post-translationally, phosphorylated on some or all of the serine and threonine residues present in the C-terminal region. As to expression, expressed in the dorsal region of the retina and sparsely expressed in the ventral region.

It is found in the membrane. Functionally, visual pigments are the light-absorbing molecules that mediate vision. They consist of an apoprotein, opsin, covalently linked to 11-cis-retinal. This is Opsin, blue-sensitive (BLOP) from Apis mellifera (Honeybee).